The following is a 46-amino-acid chain: Crambin (46 aa).

Cystine bridges form between cysteine 3-cysteine 40, cysteine 4-cysteine 32, and cysteine 16-cysteine 26.

The protein belongs to the plant thionin (TC 1.C.44) family.

It localises to the secreted. The function of this hydrophobic plant seed protein is not known. This chain is Crambin (THI2), found in Crambe hispanica subsp. abyssinica (Abyssinian kale).